A 308-amino-acid chain; its full sequence is GTPase IMAP family member 5 (308 aa).

At 1–283 the chain is on the cytoplasmic side; the sequence is MEHLQKSTYG…VKSCWSSHTA (283 aa). The 204-residue stretch at 24-227 folds into the AIG1-type G domain; it reads SSCLRILLVG…HSNDLFLHAE (204 aa). GTP contacts are provided by residues 33–41, S54, 151–153, and N188; these read GKSGCGKSA and RKE. Residues 284-304 traverse the membrane as a helical; Anchor for type IV membrane protein segment; sequence ACALLIVLGLTLLTTFINLCI. The Mitochondrial intermembrane segment spans residues 305-308; that stretch reads SRCK.

Belongs to the TRAFAC class TrmE-Era-EngA-EngB-Septin-like GTPase superfamily. AIG1/Toc34/Toc159-like paraseptin GTPase family. IAN subfamily. As to quaternary structure, interacts with BAD, BAK1, BAX, BCL2, BCL2L1/Bcl-xL and BCL2L11/BimEL. The interaction with BAX is increased, when cells initiate apoptosis upon IL2 withdrawal. Forms a complex with BCL2L1 or MCL1 and HSPA8/HSC70; the interaction between HSPA8 and BCL2L1 or MCL1 is impaired in the absence of GIMAP5. May interact (via N-terminus) with microtubules. Expressed in thymus (in thymocytes), spleen (in splenocytes), lymph node and lung. Highly expressed in T lymphocytes. Expressed in B cells and in distinct lineages of hematopoietic bone marrow cells, including natural killer, B, T, myeloid and erythroid lineages. Expressed in liver endothelial cells.

The protein localises to the lysosome. The protein resides in the lysosome membrane. Its subcellular location is the endosome. It localises to the multivesicular body membrane. It is found in the endosome membrane. Its function is as follows. Plays a role in T lymphocyte development and the optimal generation of CD4/CD8 double-positive thymocytes. Inhibitor of GSK3A. May act by sequestering GSK3A in cytoplasmic vesicles and impairing its translocation to the nucleus. Consequently, impairs GSK3A-dependent transcriptional program and regulation of the DNA damage response occurring during T cells proliferation. Required for the survival of bone marrow hematopoietic stem cells, as well as of peripheral T cells, natural killer (NK) and NK T-cell development and the maintenance of normal liver function. May promote the survival of mature T lymphocytes upon cytokine withdrawal. May regulate Ca(2+) homeostasis by modulating lysosomal Ca(2+) stores, preventing its accumulation in the absence of T cell activation. May play a role in mitochondrial DNA segregation in hematopoietic tissues. Is a regulator of liver endothelial cell homeostasis. In Mus musculus (Mouse), this protein is GTPase IMAP family member 5 (Gimap5).